Reading from the N-terminus, the 585-residue chain is Testis-specific serine kinase substrate (585 aa).

Positions 91 to 108 (EPDSSGTDSTTEDSGPLA) are enriched in low complexity. A disordered region spans residues 91–126 (EPDSSGTDSTTEDSGPLALPGPPASPTTPWAPEDPD). Phosphoserine is present on residues Ser-224, Ser-281, and Ser-309. Disordered stretches follow at residues 262-309 (SRHG…PSLS) and 559-585 (LEGSTGAMGGGSTGGAPPKRGGPGSEQ).

Post-translationally, phosphorylated on serine residue(s) by STK22A/TSSK1 and STK22B/TSSK2.

The protein resides in the cytoplasm. It localises to the cytoskeleton. It is found in the microtubule organizing center. The protein localises to the centrosome. Its subcellular location is the centriole. Its function is as follows. May play a role in testicular physiology, most probably in the process of spermatogenesis or spermatid development. The polypeptide is Testis-specific serine kinase substrate (Tsks) (Rattus norvegicus (Rat)).